Here is a 226-residue protein sequence, read N- to C-terminus: Thaumatin-like protein (226 aa).

A signal peptide spans 1 to 24 (MNFSKNLPLLVSLWAITFFAYTHA). Intrachain disulfides connect C33–C225, C74–C84, C89–C95, C140–C214, C145–C197, C153–C163, C167–C176, and C177–C184.

The protein belongs to the thaumatin family. As to expression, expressed in fruits.

The protein resides in the secreted. Functionally, 3D-structure modeling suggests it may have endo-(1,3)-beta-glucanase activity. This Olea europaea (Common olive) protein is Thaumatin-like protein.